A 552-amino-acid polypeptide reads, in one-letter code: Probable beta-glucosidase btgE (552 aa).

The first 18 residues, 1–18 (MRGAILATAAALAGTAMA), serve as a signal peptide directing secretion. Positions 250-291 (EPTSAPAAPSTTAVPATTTAAVPSTSSAAPSSSSTAPASTGA) are disordered. Residues 251-289 (PTSAPAAPSTTAVPATTTAAVPSTSSAAPSSSSTAPAST) show a composition bias toward low complexity. The active-site Proton donor is glutamate 392. Glutamate 488 acts as the Nucleophile in catalysis.

The protein belongs to the glycosyl hydrolase 17 family.

It is found in the secreted. The protein resides in the cell wall. The catalysed reaction is Hydrolysis of terminal, non-reducing beta-D-glucosyl residues with release of beta-D-glucose.. It participates in glycan metabolism; cellulose degradation. In terms of biological role, beta-glucosidases are one of a number of cellulolytic enzymes involved in the degradation of cellulosic biomass. Catalyzes the last step releasing glucose from the inhibitory cellobiose. The protein is Probable beta-glucosidase btgE (btgE) of Neosartorya fischeri (strain ATCC 1020 / DSM 3700 / CBS 544.65 / FGSC A1164 / JCM 1740 / NRRL 181 / WB 181) (Aspergillus fischerianus).